Here is a 308-residue protein sequence, read N- to C-terminus: MRALVLLLSLFLLGGQAQHVSDWTYSEGALDEAHWPQHYPACGGQRQSPINLQRTKVRYNPSLKGLNMTGYETQAGEFPMVNNGHTVQISLPSTMRMTVADGTVYIAQQMHFHWGGASSEISGSEHTVDGIRHVIEIHIVHYNSKYKSYDIAQDAPDGLAVLAAFVEVKNYPENTYYSNFISHLANIKYPGQRTTLTGLDVQDMLPRNLQHYYTYHGSLTTPPCTENVHWFVLADFVKLSRTQVWKLENSLLDHRNKTIHNDYRRTQPLNHRVVESNFPNQEYTLGSEFQFYLHKIEEILDYLRRALN.

An N-terminal signal peptide occupies residues 1-17; that stretch reads MRALVLLLSLFLLGGQA. An Alpha-carbonic anhydrase domain is found at 21 to 278; it reads SDWTYSEGAL…LNHRVVESNF (258 aa). An intrachain disulfide couples Cys-42 to Cys-224. N-linked (GlcNAc...) asparagine glycosylation occurs at Asn-67. His-85 acts as the Proton donor/acceptor in catalysis. Zn(2+)-binding residues include His-111, His-113, and His-138. 220–221 contributes to the substrate binding site; that stretch reads TT. Residue Asn-256 is glycosylated (N-linked (GlcNAc...) asparagine).

It belongs to the alpha-carbonic anhydrase family. Requires Zn(2+) as cofactor. In terms of tissue distribution, major constituent of saliva.

It localises to the secreted. The enzyme catalyses hydrogencarbonate + H(+) = CO2 + H2O. Its activity is regulated as follows. Inhibited by coumarins, sulfonamide derivatives such as acetazolamide (AZA), saccharin and Foscarnet (phosphonoformate trisodium salt). Functionally, reversible hydration of carbon dioxide. Its role in saliva is unknown. This is Carbonic anhydrase 6 (CA6) from Homo sapiens (Human).